The sequence spans 125 residues: Late histone H2A.1 (125 aa).

Basic residues predominate over residues 1–18 (MSGRGKGKAKGTKSKTRS). Positions 1 to 21 (MSGRGKGKAKGTKSKTRSSRA) are disordered. S2 carries the post-translational modification N-acetylserine. S2 carries the post-translational modification Phosphoserine. Position 104 is an N5-methylglutamine (Q104). A Glycyl lysine isopeptide (Lys-Gly) (interchain with G-Cter in ubiquitin) cross-link involves residue K119.

Belongs to the histone H2A family. The nucleosome is a histone octamer containing two molecules each of H2A, H2B, H3 and H4 assembled in one H3-H4 heterotetramer and two H2A-H2B heterodimers. The octamer wraps approximately 147 bp of DNA. In terms of processing, monoubiquitination of Lys-119 gives a specific tag for epigenetic transcriptional repression. Phosphorylation of Ser-2 directly represses transcription.

It is found in the nucleus. It localises to the chromosome. Its function is as follows. Core component of nucleosome. Nucleosomes wrap and compact DNA into chromatin, limiting DNA accessibility to the cellular machineries which require DNA as a template. Histones thereby play a central role in transcription regulation, DNA repair, DNA replication and chromosomal stability. DNA accessibility is regulated via a complex set of post-translational modifications of histones, also called histone code, and nucleosome remodeling. The chain is Late histone H2A.1 from Psammechinus miliaris (Green sea urchin).